The primary structure comprises 526 residues: Bifunctional purine biosynthesis protein PurH (526 aa).

The 149-residue stretch at 1-149 folds into the MGS-like domain; that stretch reads MLHSLPIRRA…KNHEAVTVVV (149 aa).

This sequence belongs to the PurH family.

The catalysed reaction is (6R)-10-formyltetrahydrofolate + 5-amino-1-(5-phospho-beta-D-ribosyl)imidazole-4-carboxamide = 5-formamido-1-(5-phospho-D-ribosyl)imidazole-4-carboxamide + (6S)-5,6,7,8-tetrahydrofolate. The enzyme catalyses IMP + H2O = 5-formamido-1-(5-phospho-D-ribosyl)imidazole-4-carboxamide. Its pathway is purine metabolism; IMP biosynthesis via de novo pathway; 5-formamido-1-(5-phospho-D-ribosyl)imidazole-4-carboxamide from 5-amino-1-(5-phospho-D-ribosyl)imidazole-4-carboxamide (10-formyl THF route): step 1/1. It functions in the pathway purine metabolism; IMP biosynthesis via de novo pathway; IMP from 5-formamido-1-(5-phospho-D-ribosyl)imidazole-4-carboxamide: step 1/1. The polypeptide is Bifunctional purine biosynthesis protein PurH (Rhodospirillum rubrum (strain ATCC 11170 / ATH 1.1.1 / DSM 467 / LMG 4362 / NCIMB 8255 / S1)).